Reading from the N-terminus, the 112-residue chain is Nitrogen regulatory protein P-II (112 aa).

Residue Y51 is modified to O-UMP-tyrosine.

The protein belongs to the P(II) protein family. As to quaternary structure, homotrimer.

Functionally, in nitrogen-limiting conditions, when the ratio of Gln to 2-ketoglutarate decreases, P-II is uridylylated to P-II-UMP. P-II-UMP allows the deadenylation of glutamine synthetase (GS), thus activating the enzyme. Conversely, in nitrogen excess P-II is deuridylated and promotes the adenylation of GS. P-II indirectly controls the transcription of the GS gene (glnA). P-II prevents NR-II-catalyzed conversion of NR-I to NR-I-phosphate, the transcriptional activator of glnA. When P-II is uridylylated to P-II-UMP, these events are reversed. The protein is Nitrogen regulatory protein P-II (glnB) of Mycobacterium bovis (strain ATCC BAA-935 / AF2122/97).